We begin with the raw amino-acid sequence, 505 residues long: Circadian clock protein KaiC3 (505 aa).

2 consecutive KaiC domains span residues 10–252 (EKLE…KSSD) and 253–485 (IRIT…LAGT). At Ser-423 the chain carries Phosphoserine; by autocatalysis. The residue at position 424 (Thr-424) is a Phosphothreonine; by autocatalysis.

The protein belongs to the KaiC family. As to quaternary structure, multimerizes, probably forming homohexamers, no interaction with KaiC1 or KaiC2 is seen. In another study forms hexamers, interacts with KaiB1, KaiB3, and KaiC1. Post-translationally, autophosphorylates and dephosphorylates. Dephosphorylation of KaiC3 was higher at 25 than at 30 or 35 degrees Celsius.

It carries out the reaction L-seryl-[protein] + ATP = O-phospho-L-seryl-[protein] + ADP + H(+). It catalyses the reaction L-threonyl-[protein] + ATP = O-phospho-L-threonyl-[protein] + ADP + H(+). The enzyme catalyses ATP + H2O = ADP + phosphate + H(+). With respect to regulation, ATPase activity is influenced by KaiB1 and KaiB3 in vitro; ATPase is reduced 35% by the KaiB1 tetramer and 55% by the KaiB3 monomer but not affected by KaiA or the KaiB3 tetramer. In terms of biological role, seems to be linked to dark adaption of Synechocystis cells, but is not as essential as the core oscillator KaiAB1C1 for the circadian cycle. KaiB3 and KaiC3 may cross talk with the core oscillator. Autophosphorylates and dephosphorylates independently of KaiA. Has a weak ATPase, hydrolyzes 8.5 ATP/monomer/day, has no detectable ATP synthesis activity. ATPase activity reduced 55% by KaiB3 monomer but not the KaiB3 tetramer or KaiA in vitro, reduced 35% by KaiB1 tetramer. The chain is Circadian clock protein KaiC3 from Synechocystis sp. (strain ATCC 27184 / PCC 6803 / Kazusa).